We begin with the raw amino-acid sequence, 122 residues long: Lithostathine (122 aa).

The first 26 residues, 1–26, serve as a signal peptide directing secretion; the sequence is MLPSMSLPSLXWMLLSCLMLLSQVQG. Residues 27–37 constitute a propeptide that is removed on maturation; that stretch reads EDSPADTPSAR. Residues 38-122 form the C-type lectin domain; the sequence is ISCPKGSMAY…LEPNAGGWEW (85 aa). Cysteines 40 and 51 form a disulfide.

In terms of assembly, cleaved to give an A chain and a B chain joined by a disulfide bond. In terms of tissue distribution, in pancreatic acinar cells.

The protein localises to the secreted. Functionally, might act as an inhibitor of spontaneous calcium carbonate precipitation. The protein is Lithostathine (PTP) of Sus scrofa (Pig).